The following is a 225-amino-acid chain: UPF0173 metal-dependent hydrolase Pisl_0803 (225 aa).

The protein belongs to the UPF0173 family.

The chain is UPF0173 metal-dependent hydrolase Pisl_0803 from Pyrobaculum islandicum (strain DSM 4184 / JCM 9189 / GEO3).